The following is a 373-amino-acid chain: Glutamate 5-kinase (373 aa).

Lys15 provides a ligand contact to ATP. Substrate-binding residues include Ser55, Asp142, and Asn154. Residues 174 to 175 (TD) and 216 to 222 (TGGMATK) each bind ATP. Residues 281 to 359 (AGSIVVDAGA…SEIERILGFR (79 aa)) form the PUA domain.

The protein belongs to the glutamate 5-kinase family.

Its subcellular location is the cytoplasm. It carries out the reaction L-glutamate + ATP = L-glutamyl 5-phosphate + ADP. It participates in amino-acid biosynthesis; L-proline biosynthesis; L-glutamate 5-semialdehyde from L-glutamate: step 1/2. In terms of biological role, catalyzes the transfer of a phosphate group to glutamate to form L-glutamate 5-phosphate. The protein is Glutamate 5-kinase of Geobacter sp. (strain M21).